The chain runs to 280 residues: UDP-3-O-acyl-N-acetylglucosamine deacetylase (280 aa).

Zn(2+) is bound by residues histidine 77, histidine 238, and aspartate 242. Histidine 265 serves as the catalytic Proton donor.

The protein belongs to the LpxC family. The cofactor is Zn(2+).

It catalyses the reaction a UDP-3-O-[(3R)-3-hydroxyacyl]-N-acetyl-alpha-D-glucosamine + H2O = a UDP-3-O-[(3R)-3-hydroxyacyl]-alpha-D-glucosamine + acetate. It functions in the pathway glycolipid biosynthesis; lipid IV(A) biosynthesis; lipid IV(A) from (3R)-3-hydroxytetradecanoyl-[acyl-carrier-protein] and UDP-N-acetyl-alpha-D-glucosamine: step 2/6. Functionally, catalyzes the hydrolysis of UDP-3-O-myristoyl-N-acetylglucosamine to form UDP-3-O-myristoylglucosamine and acetate, the committed step in lipid A biosynthesis. The protein is UDP-3-O-acyl-N-acetylglucosamine deacetylase of Trichormus variabilis (strain ATCC 29413 / PCC 7937) (Anabaena variabilis).